The chain runs to 249 residues: 5-amino-6-(5-phospho-D-ribitylamino)uracil phosphatase YcsE (249 aa).

Catalysis depends on Asp16, which acts as the Nucleophile. Residue Asp16 coordinates Mg(2+). Phosphate is bound at residue Met17. Asp18 provides a ligand contact to Mg(2+). Phosphate is bound by residues Thr50–Gly51 and Lys177. Positions 200 and 201 each coordinate Mg(2+). Asn203 provides a ligand contact to phosphate.

The protein belongs to the HAD-like hydrolase superfamily. Cof family. It depends on Mg(2+) as a cofactor.

The enzyme catalyses 5-amino-6-(5-phospho-D-ribitylamino)uracil + H2O = 5-amino-6-(D-ribitylamino)uracil + phosphate. It functions in the pathway cofactor biosynthesis; riboflavin biosynthesis; 5-amino-6-(D-ribitylamino)uracil from GTP: step 4/4. In terms of biological role, catalyzes the dephosphorylation of the riboflavin precursor 5-amino-6-(5-phospho-D-ribitylamino)uracil and of flavin mononucleotide (FMN) in vitro. To a lesser extent, may also catalyze the dephosphorylation of a broad range of substrates such as phosphorylated sugars and triphosphate nucleotides in vitro. The sequence is that of 5-amino-6-(5-phospho-D-ribitylamino)uracil phosphatase YcsE (ycsE) from Bacillus subtilis (strain 168).